Here is a 140-residue protein sequence, read N- to C-terminus: Large ribosomal subunit protein uL16 (140 aa).

Positions 1–14 are enriched in basic residues; that stretch reads MLSPRRTKFRKQQR. The disordered stretch occupies residues 1–22; sequence MLSPRRTKFRKQQRGRMEGAAT.

This sequence belongs to the universal ribosomal protein uL16 family. Part of the 50S ribosomal subunit.

Functionally, binds 23S rRNA and is also seen to make contacts with the A and possibly P site tRNAs. This chain is Large ribosomal subunit protein uL16, found in Cyanothece sp. (strain PCC 7425 / ATCC 29141).